A 238-amino-acid polypeptide reads, in one-letter code: Phosphoglycolate phosphatase (238 aa).

The active-site Nucleophile is aspartate 8. Mg(2+)-binding residues include aspartate 8 and aspartate 10. Lysine 163 is a binding site for substrate. Positions 186 and 190 each coordinate Mg(2+).

Belongs to the archaeal SPP-like hydrolase family. Mg(2+) serves as cofactor.

The catalysed reaction is 2-phosphoglycolate + H2O = glycolate + phosphate. Functionally, catalyzes the dephosphorylation of 2-phosphoglycolate. The chain is Phosphoglycolate phosphatase from Staphylothermus marinus (strain ATCC 43588 / DSM 3639 / JCM 9404 / F1).